The following is a 409-amino-acid chain: Translation initiation factor 2 subunit gamma (409 aa).

The tr-type G domain occupies 7–203 (QPEVNIGLVG…TIESEIPTPD (197 aa)). Residues 16–23 (GHVDHGKT) are G1. The Mg(2+) site is built by D19, T23, G44, and S46. 19–24 (DHGKTT) contributes to the GTP binding site. Residues 44 to 48 (GISIR) form a G2 region. The G3 stretch occupies residues 90–93 (DAPG). GTP contacts are provided by residues 146–149 (NKID) and 181–183 (SAQ). The segment at 146-149 (NKID) is G4. Residues 181-183 (SAQ) form a G5 region.

It belongs to the TRAFAC class translation factor GTPase superfamily. Classic translation factor GTPase family. EIF2G subfamily. Heterotrimer composed of an alpha, a beta and a gamma chain. The cofactor is Mg(2+).

The catalysed reaction is GTP + H2O = GDP + phosphate + H(+). EIF-2 functions in the early steps of protein synthesis by forming a ternary complex with GTP and initiator tRNA. The sequence is that of Translation initiation factor 2 subunit gamma from Natronomonas pharaonis (strain ATCC 35678 / DSM 2160 / CIP 103997 / JCM 8858 / NBRC 14720 / NCIMB 2260 / Gabara) (Halobacterium pharaonis).